Consider the following 139-residue polypeptide: uncharacterized protein (139 aa).

2 helical membrane-spanning segments follow: residues 35–55 and 119–139; these read AYFK…AAAA and CCLF…VFCV.

It is found in the membrane. This is an uncharacterized protein from Saccharomyces cerevisiae (strain ATCC 204508 / S288c) (Baker's yeast).